The sequence spans 133 residues: Small ribosomal subunit protein uS11 (133 aa).

The protein belongs to the universal ribosomal protein uS11 family. Part of the 30S ribosomal subunit. Interacts with proteins S7 and S18. Binds to IF-3.

In terms of biological role, located on the platform of the 30S subunit, it bridges several disparate RNA helices of the 16S rRNA. Forms part of the Shine-Dalgarno cleft in the 70S ribosome. This is Small ribosomal subunit protein uS11 from Shouchella clausii (strain KSM-K16) (Alkalihalobacillus clausii).